We begin with the raw amino-acid sequence, 904 residues long: Protein translocase subunit SecA (904 aa).

Residues Gln-89, 107–111 (GEGKT), and Asp-502 each bind ATP. The Zn(2+) site is built by Cys-888, Cys-890, Cys-899, and His-900.

Belongs to the SecA family. Monomer and homodimer. Part of the essential Sec protein translocation apparatus which comprises SecA, SecYEG and auxiliary proteins SecDF-YajC and YidC. It depends on Zn(2+) as a cofactor.

It is found in the cell inner membrane. It localises to the cytoplasm. It catalyses the reaction ATP + H2O + cellular proteinSide 1 = ADP + phosphate + cellular proteinSide 2.. In terms of biological role, part of the Sec protein translocase complex. Interacts with the SecYEG preprotein conducting channel. Has a central role in coupling the hydrolysis of ATP to the transfer of proteins into and across the cell membrane, serving both as a receptor for the preprotein-SecB complex and as an ATP-driven molecular motor driving the stepwise translocation of polypeptide chains across the membrane. In Roseobacter denitrificans (strain ATCC 33942 / OCh 114) (Erythrobacter sp. (strain OCh 114)), this protein is Protein translocase subunit SecA.